We begin with the raw amino-acid sequence, 1034 residues long: Phosphoenolpyruvate carboxylase (1034 aa).

Catalysis depends on residues H203 and K680.

The protein belongs to the PEPCase type 1 family. Requires Mg(2+) as cofactor.

The enzyme catalyses oxaloacetate + phosphate = phosphoenolpyruvate + hydrogencarbonate. Its function is as follows. Forms oxaloacetate, a four-carbon dicarboxylic acid source for the tricarboxylic acid cycle. This Synechocystis sp. (strain ATCC 27184 / PCC 6803 / Kazusa) protein is Phosphoenolpyruvate carboxylase (ppc).